The primary structure comprises 245 residues: tRNA pseudouridine synthase A (245 aa).

Residue Asp-52 is the Nucleophile of the active site. Tyr-110 contributes to the substrate binding site.

Belongs to the tRNA pseudouridine synthase TruA family. In terms of assembly, homodimer.

It catalyses the reaction uridine(38/39/40) in tRNA = pseudouridine(38/39/40) in tRNA. Its function is as follows. Formation of pseudouridine at positions 38, 39 and 40 in the anticodon stem and loop of transfer RNAs. In Borrelia turicatae (strain 91E135), this protein is tRNA pseudouridine synthase A.